A 581-amino-acid chain; its full sequence is Probable hexosyltransferase MUCI70 (581 aa).

At 1–58 the chain is on the cytoplasmic side; that stretch reads MTGLGVRSSSYGSLEKTGLNGVVLPIQITTTTRTKPSKMQKDREGIVHWICKFAGRKK. A helical; Signal-anchor for type II membrane protein membrane pass occupies residues 59–79; sequence VGMLLLFLISAVVFLRVLYVG. Topologically, residues 80-581 are lumenal; the sequence is KGEDSQEGQG…NLPVRLPDSA (502 aa). Asn-96, Asn-102, Asn-119, Asn-194, Asn-224, Asn-285, Asn-382, Asn-411, and Asn-488 each carry an N-linked (GlcNAc...) asparagine glycan. The segment at 514–581 is disordered; the sequence is RFARQRPPVP…NLPVRLPDSA (68 aa). Over residues 520 to 536 the composition is skewed to pro residues; it reads PPVPNFPPPPPSPPPPV. The span at 553–571 shows a compositional bias: basic residues; the sequence is PPRRRGRDRRSGQRGHRKA.

Belongs to the glycosyltransferase 8 family. Expressed in siliques and seeds.

It localises to the golgi apparatus membrane. Its pathway is glycan metabolism; pectin biosynthesis. Functionally, probable glycosyltransferase involved in pectin and/or xylans biosynthesis in cell walls. Together with IRX14, required for xylan and pectin synthesis in seed coat epidermal (SCE) cells. Collaboratively with GAUT11, essential for the accumulation of seed mucilage, a gelatinous wall rich in unbranched rhamnogalacturonan I (RG I), and for shaping the surface morphology of seeds. The protein is Probable hexosyltransferase MUCI70 of Arabidopsis thaliana (Mouse-ear cress).